Consider the following 113-residue polypeptide: Ribonuclease P protein component (113 aa).

It belongs to the RnpA family. As to quaternary structure, consists of a catalytic RNA component (M1 or rnpB) and a protein subunit.

It carries out the reaction Endonucleolytic cleavage of RNA, removing 5'-extranucleotides from tRNA precursor.. RNaseP catalyzes the removal of the 5'-leader sequence from pre-tRNA to produce the mature 5'-terminus. It can also cleave other RNA substrates such as 4.5S RNA. The protein component plays an auxiliary but essential role in vivo by binding to the 5'-leader sequence and broadening the substrate specificity of the ribozyme. The sequence is that of Ribonuclease P protein component from Vesicomyosocius okutanii subsp. Calyptogena okutanii (strain HA).